A 425-amino-acid polypeptide reads, in one-letter code: uncharacterized protein (425 aa).

The region spanning 2–53 is the F-box domain; the sequence is SFNLLDLPIVPRQKALKYLEPIDLFELSLCSKRMAQSVRDLKIEASAHFITL.

This is an uncharacterized protein from Caenorhabditis elegans.